The sequence spans 251 residues: DNA-directed RNA polymerase III subunit RPC7 (251 aa).

Residues 186–251 (DDASTGDGAA…EEDPNEEAAF (66 aa)) are disordered. A Phosphoserine modification is found at serine 189. Composition is skewed to acidic residues over residues 203–225 (GEDDDLADDDFEEDEDEEDDDDY) and 234–251 (GDDDDYGDEEDPNEEAAF).

It belongs to the eukaryotic RPC7 RNA polymerase subunit family. As to quaternary structure, component of the RNA polymerase III (Pol III) complex consisting of 17 subunits.

It localises to the nucleus. Its function is as follows. DNA-dependent RNA polymerase catalyzes the transcription of DNA into RNA using the four ribonucleoside triphosphates as substrates. Specific peripheric component of RNA polymerase III which synthesizes small RNAs, such as 5S rRNA and tRNAs. C31 is involved in the formation of the initiation complex. In Saccharomyces cerevisiae (strain ATCC 204508 / S288c) (Baker's yeast), this protein is DNA-directed RNA polymerase III subunit RPC7 (RPC31).